A 129-amino-acid chain; its full sequence is M-zodatoxin-Lt8e (129 aa).

The first 20 residues, 1–20 (MKYFVVALALVAAFVCIAES), serve as a signal peptide directing secretion. Residues 21-60 (KPAESEHELAEVEEENELADLEDAVWLEHLADLSDLEEAR) constitute a propeptide that is removed on maturation. A Processing quadruplet motif motif is present at residues 57–60 (EEAR).

Post-translationally, cleavage of the propeptide depends on the processing quadruplet motif (XXXR, with at least one of X being E). In terms of tissue distribution, expressed by the venom gland.

The protein resides in the secreted. In terms of biological role, insecticidal, cytolytic and antimicrobial peptide. Forms voltage-dependent, ion-permeable channels in membranes. At high concentration causes cell membrane lysis. This is M-zodatoxin-Lt8e (cit 1-5) from Lachesana tarabaevi (Spider).